Here is a 214-residue protein sequence, read N- to C-terminus: Potassium-transporting ATPase KdpC subunit (214 aa).

The helical transmembrane segment at 17 to 37 (LWVITALIYPFSMIAIGQILF) threads the bilayer.

Belongs to the KdpC family. As to quaternary structure, the system is composed of three essential subunits: KdpA, KdpB and KdpC.

Its subcellular location is the cell inner membrane. Functionally, part of the high-affinity ATP-driven potassium transport (or Kdp) system, which catalyzes the hydrolysis of ATP coupled with the electrogenic transport of potassium into the cytoplasm. This subunit acts as a catalytic chaperone that increases the ATP-binding affinity of the ATP-hydrolyzing subunit KdpB by the formation of a transient KdpB/KdpC/ATP ternary complex. The sequence is that of Potassium-transporting ATPase KdpC subunit from Microcystis aeruginosa (strain NIES-843 / IAM M-2473).